Consider the following 172-residue polypeptide: uncharacterized protein (172 aa).

This is an uncharacterized protein from Homo sapiens (Human).